A 151-amino-acid polypeptide reads, in one-letter code: Zinc finger HIT domain-containing protein 3 (151 aa).

Residues Cys11, Cys14, Cys22, Cys25, Cys30, Cys34, His38, and Cys42 each coordinate Zn(2+). The segment at 11-42 (CVVCLEKPKYRCPTCRVPYCSVPCFQKHKEQC) adopts an HIT-type zinc-finger fold. Over residues 43–53 (SSEARPVEKRR) the composition is skewed to basic and acidic residues. The interval 43–81 (SSEARPVEKRRAGPPVRSEESKDDDSSVADFLNSDEEED) is disordered. Acidic residues predominate over residues 63 to 81 (SKDDDSSVADFLNSDEEED). Phosphoserine is present on Ser76.

In terms of assembly, thyroid receptor interacting proteins (TRIPs) specifically interact with the ligand binding domain of the thyroid receptor (TR). Requires the presence of thyroid hormone for its interaction. Interacts with NUFIP1. Interacts (via HIT-type zinc finger) with the RUVBL1/RUVBL2 complex in the presence of ADP. As to expression, expressed in the cerebellum.

Its subcellular location is the cytoplasm. It localises to the nucleus. The sequence is that of Zinc finger HIT domain-containing protein 3 (Znhit3) from Mus musculus (Mouse).